Consider the following 80-residue polypeptide: Serine protease inhibitor Kazal-type 6 (80 aa).

The signal sequence occupies residues 1–23; sequence MKLSGMFLLLSLALFCFLTGVFS. Glutamine 24 is subject to Pyrrolidone carboxylic acid. The Kazal-like domain maps to 24–80; sequence QGGQVDCGEFQDPKVYCTRESNPHCGSDGQTYGNKCAFCKAIVKSGGKISLKHPGKC. Cystine bridges form between cysteine 30–cysteine 62, cysteine 40–cysteine 59, and cysteine 48–cysteine 80.

Its subcellular location is the secreted. Its function is as follows. Serine protease inhibitor selective for kallikreins. Efficiently inhibits KLK4, KLK5, KLK6, KLK7, KLK12, KLK13 and KLK14. Doesn't inhibit KLK8. In Homo sapiens (Human), this protein is Serine protease inhibitor Kazal-type 6 (SPINK6).